We begin with the raw amino-acid sequence, 62 residues long: Small ribosomal subunit protein eS27 (62 aa).

4 residues coordinate Zn(2+): C17, C20, C36, and C39. Residues 17–39 form a C4-type zinc finger; the sequence is CPDCENEQIIFEKASTVVDCVVC.

The protein belongs to the eukaryotic ribosomal protein eS27 family. Part of the 30S ribosomal subunit. It depends on Zn(2+) as a cofactor.

The polypeptide is Small ribosomal subunit protein eS27 (Methanosphaerula palustris (strain ATCC BAA-1556 / DSM 19958 / E1-9c)).